The following is a 226-amino-acid chain: Potassium/proton antiporter CemA (226 aa).

The next 3 membrane-spanning stretches (helical) occupy residues 7 to 27 (FTSL…SLSF), 111 to 131 (IICF…LFIL), and 186 to 206 (IISG…KYWI).

Belongs to the CemA family.

The protein localises to the plastid. Its subcellular location is the chloroplast inner membrane. The enzyme catalyses K(+)(in) + H(+)(out) = K(+)(out) + H(+)(in). Its function is as follows. Contributes to K(+)/H(+) antiport activity by supporting proton efflux to control proton extrusion and homeostasis in chloroplasts in a light-dependent manner to modulate photosynthesis. Prevents excessive induction of non-photochemical quenching (NPQ) under continuous-light conditions. Indirectly promotes efficient inorganic carbon uptake into chloroplasts. The polypeptide is Potassium/proton antiporter CemA (Buxus microphylla (Littleleaf boxwood)).